A 548-amino-acid polypeptide reads, in one-letter code: Chaperonin GroEL (548 aa).

ATP-binding positions include 29 to 32 (TLGP), lysine 50, 86 to 90 (DGTTT), glycine 416, and aspartate 497.

It belongs to the chaperonin (HSP60) family. As to quaternary structure, forms a cylinder of 14 subunits composed of two heptameric rings stacked back-to-back. Interacts with the co-chaperonin GroES.

It is found in the cytoplasm. The enzyme catalyses ATP + H2O + a folded polypeptide = ADP + phosphate + an unfolded polypeptide.. In terms of biological role, together with its co-chaperonin GroES, plays an essential role in assisting protein folding. The GroEL-GroES system forms a nano-cage that allows encapsulation of the non-native substrate proteins and provides a physical environment optimized to promote and accelerate protein folding. The chain is Chaperonin GroEL from Neorickettsia sennetsu (strain ATCC VR-367 / Miyayama) (Ehrlichia sennetsu).